The primary structure comprises 254 residues: Phosphatidylglycerol--prolipoprotein diacylglyceryl transferase (254 aa).

4 consecutive transmembrane segments (helical) span residues 11-31, 49-69, 84-104, and 109-129; these read LAIR…LLLA, FLIA…IFEF, QGGL…YIYL, and ESFF…QAIG. Arg130 serves as a coordination point for a 1,2-diacyl-sn-glycero-3-phospho-(1'-sn-glycerol). A run of 3 helical transmembrane segments spans residues 169-189, 196-216, and 228-248; these read PTFL…VYLL, GIVF…IEGL, and VAQL…YNII.

This sequence belongs to the Lgt family.

Its subcellular location is the cell membrane. The catalysed reaction is L-cysteinyl-[prolipoprotein] + a 1,2-diacyl-sn-glycero-3-phospho-(1'-sn-glycerol) = an S-1,2-diacyl-sn-glyceryl-L-cysteinyl-[prolipoprotein] + sn-glycerol 1-phosphate + H(+). It functions in the pathway protein modification; lipoprotein biosynthesis (diacylglyceryl transfer). In terms of biological role, catalyzes the transfer of the diacylglyceryl group from phosphatidylglycerol to the sulfhydryl group of the N-terminal cysteine of a prolipoprotein, the first step in the formation of mature lipoproteins. In Clostridium botulinum (strain ATCC 19397 / Type A), this protein is Phosphatidylglycerol--prolipoprotein diacylglyceryl transferase.